The primary structure comprises 221 residues: ATP phosphoribosyltransferase (221 aa).

This sequence belongs to the ATP phosphoribosyltransferase family. Short subfamily. As to quaternary structure, heteromultimer composed of HisG and HisZ subunits.

The protein resides in the cytoplasm. The enzyme catalyses 1-(5-phospho-beta-D-ribosyl)-ATP + diphosphate = 5-phospho-alpha-D-ribose 1-diphosphate + ATP. It functions in the pathway amino-acid biosynthesis; L-histidine biosynthesis; L-histidine from 5-phospho-alpha-D-ribose 1-diphosphate: step 1/9. Functionally, catalyzes the condensation of ATP and 5-phosphoribose 1-diphosphate to form N'-(5'-phosphoribosyl)-ATP (PR-ATP). Has a crucial role in the pathway because the rate of histidine biosynthesis seems to be controlled primarily by regulation of HisG enzymatic activity. This is ATP phosphoribosyltransferase from Anaeromyxobacter dehalogenans (strain 2CP-1 / ATCC BAA-258).